The sequence spans 90 residues: Small ribosomal subunit protein bS16 (90 aa).

This sequence belongs to the bacterial ribosomal protein bS16 family.

This chain is Small ribosomal subunit protein bS16, found in Geobacillus thermodenitrificans (strain NG80-2).